The primary structure comprises 451 residues: Uronate isomerase (451 aa).

It belongs to the metallo-dependent hydrolases superfamily. Uronate isomerase family.

It carries out the reaction D-glucuronate = D-fructuronate. The catalysed reaction is aldehydo-D-galacturonate = keto-D-tagaturonate. The protein operates within carbohydrate metabolism; pentose and glucuronate interconversion. This chain is Uronate isomerase, found in Thermotoga petrophila (strain ATCC BAA-488 / DSM 13995 / JCM 10881 / RKU-1).